The sequence spans 211 residues: Redox-sensing transcriptional repressor Rex (211 aa).

Positions 18-57 (LYYRFLKNLHASGKQRVSSAELSEAVKVDSATIRRDFSYF) form a DNA-binding region, H-T-H motif. 92-97 (GVGNLG) is an NAD(+) binding site.

The protein belongs to the transcriptional regulatory Rex family. As to quaternary structure, homodimer.

It is found in the cytoplasm. In terms of biological role, modulates transcription in response to changes in cellular NADH/NAD(+) redox state. The chain is Redox-sensing transcriptional repressor Rex from Anoxybacillus flavithermus (strain DSM 21510 / WK1).